We begin with the raw amino-acid sequence, 258 residues long: 4,5-dihydroxyphthalate decarboxylase (258 aa).

This sequence to P.testosteroni DHP decarboxylase.

The enzyme catalyses 4,5-dihydroxyphthalate + H(+) = 3,4-dihydroxybenzoate + CO2. Its pathway is xenobiotic degradation; phthalate degradation; 3,4-dihydroxybenzoate from phthalate: step 3/3. The polypeptide is 4,5-dihydroxyphthalate decarboxylase (pht5) (Pseudomonas putida (Arthrobacter siderocapsulatus)).